We begin with the raw amino-acid sequence, 335 residues long: Photosystem II assembly lipoprotein Ycf48 (335 aa).

The first 23 residues, 1–23 (MSRLFSNLFNLLLIAAIGFGLSG), serve as a signal peptide directing secretion. The N-palmitoyl cysteine moiety is linked to residue cysteine 24. The S-diacylglycerol cysteine moiety is linked to residue cysteine 24.

Belongs to the Ycf48 family. Part of early PSII assembly complexes which includes D1 (psbA) and PsbI; not found in mature PSII. Binds to the lumenal side of PSII complexes. Interacts with YidC.

The protein resides in the cellular thylakoid membrane. Functionally, a factor required for optimal assembly of photosystem II (PSII), acting in the early stages of PSII assembly. Also plays a role in replacement of photodamaged D1 (psbA). Assists YidC in synthesis of chlorophyll-binding proteins. The protein is Photosystem II assembly lipoprotein Ycf48 of Prochlorococcus marinus (strain MIT 9313).